The primary structure comprises 485 residues: Sulfated surface glycoprotein 185 (485 aa).

A signal peptide spans Met-1–Ala-20. N-linked (GlcNAc...) asparagine glycosylation occurs at Asn-193. The disordered stretch occupies residues Leu-212–Pro-317. Composition is skewed to pro residues over residues Gly-221–Gln-234 and Pro-241–Pro-317. A glycan (N-linked (GlcNAc...) asparagine) is linked at Asn-347.

As to quaternary structure, polymer. In terms of processing, intersubunit cross-links are formed between saccharide chains rather than between polypeptide chains. Hydroxylated on proline residues in the Pro-rich central domain. Post-translationally, glycosylated; contains sulfate-substituted glycans.

Its function is as follows. The extracellular matrix (ECM) of Volvox contains insoluble fibrous layers that surround individual cells at a distance to form contiguous cellular compartments. SSG 185 is the monomeric precursor of this substructure (C3Z structure). This is Sulfated surface glycoprotein 185 from Volvox carteri (Green alga).